The primary structure comprises 100 residues: Urease subunit gamma (100 aa).

Belongs to the urease gamma subunit family. Heterotrimer of UreA (gamma), UreB (beta) and UreC (alpha) subunits. Three heterotrimers associate to form the active enzyme.

The protein resides in the cytoplasm. It carries out the reaction urea + 2 H2O + H(+) = hydrogencarbonate + 2 NH4(+). The protein operates within nitrogen metabolism; urea degradation; CO(2) and NH(3) from urea (urease route): step 1/1. The sequence is that of Urease subunit gamma from Pseudomonas aeruginosa (strain UCBPP-PA14).